The primary structure comprises 92 residues: Small ribosomal subunit protein uS19 (92 aa).

Belongs to the universal ribosomal protein uS19 family.

In terms of biological role, protein S19 forms a complex with S13 that binds strongly to the 16S ribosomal RNA. The sequence is that of Small ribosomal subunit protein uS19 from Buchnera aphidicola subsp. Schizaphis graminum (strain Sg).